Here is a 383-residue protein sequence, read N- to C-terminus: ATP phosphoribosyltransferase regulatory subunit (383 aa).

Belongs to the class-II aminoacyl-tRNA synthetase family. HisZ subfamily. Heteromultimer composed of HisG and HisZ subunits.

It is found in the cytoplasm. Its pathway is amino-acid biosynthesis; L-histidine biosynthesis; L-histidine from 5-phospho-alpha-D-ribose 1-diphosphate: step 1/9. In terms of biological role, required for the first step of histidine biosynthesis. May allow the feedback regulation of ATP phosphoribosyltransferase activity by histidine. This chain is ATP phosphoribosyltransferase regulatory subunit, found in Neisseria meningitidis serogroup C (strain 053442).